The primary structure comprises 288 residues: Probable ketoamine kinase VP1481 (288 aa).

N92–L94 provides a ligand contact to ATP. D195 (proton acceptor) is an active-site residue.

It belongs to the fructosamine kinase family.

Functionally, ketoamine kinase that phosphorylates ketoamines on the third carbon of the sugar moiety to generate ketoamine 3-phosphate. This is Probable ketoamine kinase VP1481 from Vibrio parahaemolyticus serotype O3:K6 (strain RIMD 2210633).